The following is a 124-amino-acid chain: Membrane magnesium transporter 2 (124 aa).

A topological domain (cytoplasmic) is located at residue methionine 1. Residues 2–22 (VAWLWKVLVGVGLSALAHAAF) traverse the membrane as a helical segment. Residues 23 to 44 (SAAQHRSHTRLAEMKYEPLPTD) are Lumenal-facing. The helical transmembrane segment at 45–65 (IVLQTLLAFALTCYGVVHTAG) threads the bilayer. Residues 66–124 (DFRDRDATSELKNVTFDTLRNRPSFYVFQHSGSSLLQPSDTTRSSNLNVPSSDDIRLKF) lie on the Cytoplasmic side of the membrane.

It belongs to the membrane magnesium transporter (TC 1.A.67) family.

The protein resides in the golgi apparatus membrane. The protein localises to the early endosome membrane. Functionally, mediates Mg(2+) transport. The polypeptide is Membrane magnesium transporter 2 (Rattus norvegicus (Rat)).